The sequence spans 428 residues: Dihydrolipoyllysine-residue acetyltransferase component of pyruvate dehydrogenase complex (428 aa).

Positions 2 to 77 (AFEFKLPDIG…TVGQTLITLD (76 aa)) constitute a Lipoyl-binding domain. N6-lipoyllysine is present on Lys-43. Residues 88–123 (GQEQEEAKKEEKTETVSKEEKVDAVAPNAPAAEAEA) form a disordered region. Basic and acidic residues predominate over residues 89–110 (QEQEEAKKEEKTETVSKEEKVD). Residues 111 to 123 (AVAPNAPAAEAEA) show a composition bias toward low complexity. In terms of domain architecture, Peripheral subunit-binding (PSBD) spans 130–167 (IAMPSVRKYAREKGVDIRLVQGTGKNGRVLKEDIDAFL). Low complexity predominate over residues 177-194 (AAEEKAAPAAAKPATTEG). The interval 177–201 (AAEEKAAPAAAKPATTEGEFPETRE) is disordered. His-399 is a catalytic residue.

This sequence belongs to the 2-oxoacid dehydrogenase family. As to quaternary structure, forms a 60-polypeptide structural core with icosahedral symmetry. (R)-lipoate serves as cofactor.

It catalyses the reaction N(6)-[(R)-dihydrolipoyl]-L-lysyl-[protein] + acetyl-CoA = N(6)-[(R)-S(8)-acetyldihydrolipoyl]-L-lysyl-[protein] + CoA. Functionally, the pyruvate dehydrogenase complex catalyzes the overall conversion of pyruvate to acetyl-CoA and CO(2). It contains multiple copies of three enzymatic components: pyruvate dehydrogenase (E1), dihydrolipoamide acetyltransferase (E2) and lipoamide dehydrogenase (E3). The sequence is that of Dihydrolipoyllysine-residue acetyltransferase component of pyruvate dehydrogenase complex (pdhC) from Geobacillus stearothermophilus (Bacillus stearothermophilus).